The chain runs to 335 residues: Mitochondrial fission regulator 1 (335 aa).

A mitochondrion-targeting transit peptide spans 1–48 (MIRWFKCFMRMIFEQVGLNMESVLWSSKPYGSSRSIVRKIGTNLSLIQ). The stretch at 134–170 (RSTVIANEEAMQKISALENELATLRAQIAKIVILQEQ) forms a coiled coil. Positions 182–309 (ASAAVPCVPP…DKVIPKSETN (128 aa)) are necessary and sufficient to promote mitochondrial fission. Residues 219–240 (RKNRKTNSGPIPTENGPKKPEI) form a disordered region.

The protein belongs to the MTFR1 family. Widely expressed in embryonic tissues with higher expression in cartilage and hypertrophic chondrocytes. Specifically expressed in hypertrophic chondrocytes (at protein level).

It is found in the mitochondrion. Its function is as follows. May play a role in mitochondrial aerobic respiration. May also regulate mitochondrial organization and fission. This is Mitochondrial fission regulator 1 (MTFR1) from Gallus gallus (Chicken).